The following is a 279-amino-acid chain: Undecaprenyl-diphosphatase (279 aa).

6 helical membrane-spanning segments follow: residues 45-65 (FVEM…IVIY), 85-105 (WQLW…ALPF), 113-133 (FNFM…FIWV), 188-208 (SVAA…YSGL), 226-246 (LILL…IRFL), and 255-275 (FTIF…YWLV).

Belongs to the UppP family.

It localises to the cell membrane. The catalysed reaction is di-trans,octa-cis-undecaprenyl diphosphate + H2O = di-trans,octa-cis-undecaprenyl phosphate + phosphate + H(+). Its function is as follows. Catalyzes the dephosphorylation of undecaprenyl diphosphate (UPP). Confers resistance to bacitracin. In Streptococcus agalactiae serotype Ia (strain ATCC 27591 / A909 / CDC SS700), this protein is Undecaprenyl-diphosphatase.